The primary structure comprises 803 residues: Myb-like protein V (803 aa).

Disordered stretches follow at residues serine 237–leucine 333 and lysine 429–lysine 803. Residues aspartate 258–serine 323 are a coiled coil. The segment covering aspartate 271–aspartate 294 has biased composition (acidic residues). Over residues serine 295–asparagine 315 the composition is skewed to low complexity. One can recognise a Myb-like domain in the interval glycine 332–arginine 379. Coiled coils occupy residues glutamate 400–lysine 429 and asparagine 463–valine 496. Positions lysine 429 to serine 438 are enriched in polar residues. Acidic residues-rich tracts occupy residues asparagine 448 to aspartate 480 and glutamate 510 to glutamate 533. 2 stretches are compositionally biased toward basic residues: residues lysine 537–lysine 553 and histidine 568–glutamine 577. Residues lysine 573 to lysine 616 are a coiled coil. The span at glutamate 586–glutamate 609 shows a compositional bias: acidic residues. 2 stretches are compositionally biased toward low complexity: residues threonine 625 to threonine 636 and lysine 666 to lysine 733. Residues leucine 786 to lysine 795 are compositionally biased toward basic and acidic residues.

This Dictyostelium discoideum (Social amoeba) protein is Myb-like protein V (mybV).